The sequence spans 299 residues: Urease accessory protein UreD (299 aa).

The protein belongs to the UreD family. In terms of assembly, ureD, UreF and UreG form a complex that acts as a GTP-hydrolysis-dependent molecular chaperone, activating the urease apoprotein by helping to assemble the nickel containing metallocenter of UreC. The UreE protein probably delivers the nickel.

It is found in the cytoplasm. In terms of biological role, required for maturation of urease via the functional incorporation of the urease nickel metallocenter. The protein is Urease accessory protein UreD of Haloarcula marismortui (strain ATCC 43049 / DSM 3752 / JCM 8966 / VKM B-1809) (Halobacterium marismortui).